Reading from the N-terminus, the 686-residue chain is Amyloid-beta-like protein (686 aa).

The first 21 residues, 1 to 21, serve as a signal peptide directing secretion; the sequence is MTVGKLMIGLLIPILVATVYA. Residues 22–621 are Extracellular-facing; sequence EGSPAGSKRH…VERSASSVFQ (600 aa). The interval 32-125 is GFLD subdomain; that stretch reads EKFIPMVAFS…PYHCIDGEFH (94 aa). The E1 domain maps to 32 to 197; it reads EKFIPMVAFS…TGVEFVCCPN (166 aa). 6 disulfide bridges follow: Cys42-Cys65, Cys76-Cys119, Cys101-Cys108, Cys135-Cys195, Cys146-Cys182, and Cys160-Cys194. A glycan (N-linked (GlcNAc...) asparagine) is linked at Asn84. The segment at 133–197 is cuBD subdomain; it reads HDCQFSHVNS…TGVEFVCCPN (65 aa). N-linked (GlcNAc...) asparagine glycosylation is present at Asn201. Positions 201–245 are disordered; that stretch reads NKTDVQKTKEDEDDDDDEDDAYEDDYSEESDEKDEEEPSSQDPYF. Acidic residues predominate over residues 211–239; that stretch reads DEDDDDDEDDAYEDDYSEESDEKDEEEPS. The E2 domain occupies 240–440; that stretch reads SQDPYFKIAN…KYVRPIAVTY (201 aa). N-linked (GlcNAc...) asparagine glycosylation occurs at Asn249. Heparin-binding positions include 252–255 and His382; that span reads NEHD. Asn417 is a glycosylation site (N-linked (GlcNAc...) asparagine). Disordered stretches follow at residues 479 to 526 and 550 to 585; these read PTTT…DMKK and KLVE…NIKE. The span at 500-516 shows a compositional bias: acidic residues; the sequence is SDSEEEADEYYEDEDDE. Residues 517 to 526 show a composition bias toward basic and acidic residues; sequence QVKKTPDMKK. Acidic residues predominate over residues 558-567; that stretch reads TDDEDDDEDS. Residues 622–642 form a helical membrane-spanning segment; it reads PYVLASAMFITAICIIAFAIT. The Cytoplasmic segment spans residues 643 to 686; the sequence is NARRRRAMRGFIEVDVYTPEERHVAGMQVNGYENPTYSFFDSKA. The YENPXY motif motif lies at 674–679; that stretch reads YENPTY.

The protein belongs to the APP family. In terms of assembly, interacts (via cytoplasmic domain) with feh-1 (via PID 2 domain). Extracellular region is proteolytically cleaved. In terms of tissue distribution, expressed in the head, pharynx, spermatheca, uterus, vulva, tail and ventral neurons. Specifically expressed in nerve ring interneurons, the ventral cord, socket and amphids in the head, with strong expression in junctional cells, including the pharyngeal intestinal valve and uterine seam junction, and the excretory cell and weak expression in epidermal epithelial cells, including hyp7 cells, vulval cells, rectal valve cells, pharyngeal arcade cells and the tail hypodermis.

The protein resides in the membrane. It is found in the early endosome. In terms of biological role, required for normal developmental progression throughout all life stages. Specifically required for the molt stage during all larval transitions and morphogenesis. Acts with heterochronic genes, including members of the let-7 family, to regulate larval stage to adult transition. Acts synergistically with acn-1 in let-7 regulated postembryonic cell division of hypodermal seam cells. Acts in multiple pathways to influence daf-12 and daf-16 activity to in turn regulate physiological and reproductive processes such as body size and egg-laying. May play a role in neurotransmission. The protein is Amyloid-beta-like protein of Caenorhabditis elegans.